We begin with the raw amino-acid sequence, 384 residues long: MQFKPAVTALVSAVALATLLSGCKKEEAAPAAQAPQVGVVTIQPQAFTLTSELPGRTSAYRVAEVRPQVNGIILKRLFKEGSEVKEGQQLYQIDPAVYEATLANAKANLLATRSLAERYKQLIDEQAVSKQEYDDANAKRLQAEASLKSAQIDLRYTKVLAPISGRIGRSSFTEGALVSNGQTDAMATIQQLDPIYVDVTQSTAELLKLRRDLESGQLQKAGDNAASVQLVLEDGSLFKQEGRLEFSEVAVDETTGSVTLRALFPNPDHTLLPGMFVHARLKAGVNANAILAPQQGVTRDLKGAPTALVVNQENKVELRQLKASRTLGSDWLIEEGLNPGDRLITEGLQYVRPGVEVKVSDATNVKKPAGPDQANAAKADAKAE.

The N-terminal stretch at 1–22 (MQFKPAVTALVSAVALATLLSG) is a signal peptide. Cys-23 carries the N-palmitoyl cysteine lipid modification. Cys-23 is lipidated: S-diacylglycerol cysteine. A coiled-coil region spans residues 115–155 (LAERYKQLIDEQAVSKQEYDDANAKRLQAEASLKSAQIDLR). The disordered stretch occupies residues 362–384 (ATNVKKPAGPDQANAAKADAKAE). Low complexity predominate over residues 368-378 (PAGPDQANAAK).

Belongs to the membrane fusion protein (MFP) (TC 8.A.1) family.

It localises to the cell inner membrane. The periplasmic linker protein component of an organic solvent and antibiotic efflux pump; confers resistance to toluene, hexane, p-xylene, ampicillin, penicillin G, erythromycin, novobiocin and tetracycline. The polypeptide is Multidrug/solvent efflux pump periplasmic linker protein MepA (mepA) (Pseudomonas putida (Arthrobacter siderocapsulatus)).